A 466-amino-acid polypeptide reads, in one-letter code: Adenosylhomocysteinase (466 aa).

3 residues coordinate substrate: Thr-57, Asp-132, and Glu-192. 193–195 provides a ligand contact to NAD(+); sequence TTT. Substrate contacts are provided by Lys-222 and Asp-226. NAD(+) contacts are provided by residues Asn-227, 256-261, Glu-279, Asn-314, 335-337, and Asn-380; these read GYGDVG and IGH.

This sequence belongs to the adenosylhomocysteinase family. The cofactor is NAD(+).

Its subcellular location is the cytoplasm. The enzyme catalyses S-adenosyl-L-homocysteine + H2O = L-homocysteine + adenosine. Its pathway is amino-acid biosynthesis; L-homocysteine biosynthesis; L-homocysteine from S-adenosyl-L-homocysteine: step 1/1. In terms of biological role, may play a key role in the regulation of the intracellular concentration of adenosylhomocysteine. The polypeptide is Adenosylhomocysteinase (Chromobacterium violaceum (strain ATCC 12472 / DSM 30191 / JCM 1249 / CCUG 213 / NBRC 12614 / NCIMB 9131 / NCTC 9757 / MK)).